We begin with the raw amino-acid sequence, 320 residues long: Glyoxylate/hydroxypyruvate reductase B (320 aa).

Residues arginine 233 and glutamate 262 contribute to the active site. The Proton donor role is filled by histidine 281.

This sequence belongs to the D-isomer specific 2-hydroxyacid dehydrogenase family. GhrB subfamily. As to quaternary structure, homodimer.

Its subcellular location is the cytoplasm. The catalysed reaction is glycolate + NADP(+) = glyoxylate + NADPH + H(+). It catalyses the reaction (R)-glycerate + NAD(+) = 3-hydroxypyruvate + NADH + H(+). It carries out the reaction (R)-glycerate + NADP(+) = 3-hydroxypyruvate + NADPH + H(+). Its function is as follows. Catalyzes the NADPH-dependent reduction of glyoxylate and hydroxypyruvate into glycolate and glycerate, respectively. This is Glyoxylate/hydroxypyruvate reductase B from Pectobacterium carotovorum subsp. carotovorum (strain PC1).